The sequence spans 177 residues: Thymidine kinase (177 aa).

11–18 (GPMFSGKS) contacts ATP. Residue Glu83 is the Proton acceptor of the active site. Substrate is bound at residue Phe113. 2 residues coordinate Zn(2+): Cys138 and Cys141. Substrate is bound at residue 157 to 161 (IEIIG). Residues Cys170 and Cys173 each coordinate Zn(2+).

The protein belongs to the thymidine kinase family. In terms of assembly, homotetramer. Two molecules of substrate bind to each enzyme tetramer.

The enzyme catalyses thymidine + ATP = dTMP + ADP + H(+). In terms of biological role, phosphorylates thymidine and thymidine analogs, such as azidothymidine (AZT). Part of the salvage pathway for pyrimidine deoxyribonucleotide synthesis. This chain is Thymidine kinase (OPG101), found in Procyon lotor (Raccoon).